A 358-amino-acid polypeptide reads, in one-letter code: Heat-inducible transcription repressor HrcA (358 aa).

This sequence belongs to the HrcA family.

Negative regulator of class I heat shock genes (grpE-dnaK-dnaJ and groELS operons). Prevents heat-shock induction of these operons. This chain is Heat-inducible transcription repressor HrcA, found in Caulobacter vibrioides (strain NA1000 / CB15N) (Caulobacter crescentus).